Here is a 469-residue protein sequence, read N- to C-terminus: 3-isopropylmalate dehydratase large subunit (469 aa).

Cys-347, Cys-407, and Cys-410 together coordinate [4Fe-4S] cluster.

It belongs to the aconitase/IPM isomerase family. LeuC type 1 subfamily. In terms of assembly, heterodimer of LeuC and LeuD. Requires [4Fe-4S] cluster as cofactor.

The catalysed reaction is (2R,3S)-3-isopropylmalate = (2S)-2-isopropylmalate. The protein operates within amino-acid biosynthesis; L-leucine biosynthesis; L-leucine from 3-methyl-2-oxobutanoate: step 2/4. In terms of biological role, catalyzes the isomerization between 2-isopropylmalate and 3-isopropylmalate, via the formation of 2-isopropylmaleate. In Synechococcus sp. (strain RCC307), this protein is 3-isopropylmalate dehydratase large subunit.